The chain runs to 241 residues: Probable transcriptional regulatory protein FMG_0893 (241 aa).

It belongs to the TACO1 family.

Its subcellular location is the cytoplasm. This chain is Probable transcriptional regulatory protein FMG_0893, found in Finegoldia magna (strain ATCC 29328 / DSM 20472 / WAL 2508) (Peptostreptococcus magnus).